Here is a 437-residue protein sequence, read N- to C-terminus: Phosphomethylpyrimidine synthase (437 aa).

Substrate-binding positions include asparagine 69, methionine 98, tyrosine 127, histidine 163, 185–187 (SRG), 226–229 (DACR), and glutamate 265. Residue histidine 269 participates in Zn(2+) binding. Residue tyrosine 292 participates in substrate binding. Histidine 333 is a Zn(2+) binding site. [4Fe-4S] cluster contacts are provided by cysteine 409, cysteine 412, and cysteine 416.

The protein belongs to the ThiC family. Requires [4Fe-4S] cluster as cofactor.

It catalyses the reaction 5-amino-1-(5-phospho-beta-D-ribosyl)imidazole + S-adenosyl-L-methionine = 4-amino-2-methyl-5-(phosphooxymethyl)pyrimidine + CO + 5'-deoxyadenosine + formate + L-methionine + 3 H(+). Its pathway is cofactor biosynthesis; thiamine diphosphate biosynthesis. In terms of biological role, catalyzes the synthesis of the hydroxymethylpyrimidine phosphate (HMP-P) moiety of thiamine from aminoimidazole ribotide (AIR) in a radical S-adenosyl-L-methionine (SAM)-dependent reaction. This chain is Phosphomethylpyrimidine synthase, found in Clostridium botulinum (strain Langeland / NCTC 10281 / Type F).